The following is a 403-amino-acid chain: Tyrosine--tRNA ligase (403 aa).

Residues Pro-45–His-54 carry the 'HIGH' region motif. A 'KMSKS' region motif is present at residues Lys-229–Ser-233. Position 232 (Lys-232) interacts with ATP. Residues Val-341–Phe-402 enclose the S4 RNA-binding domain.

This sequence belongs to the class-I aminoacyl-tRNA synthetase family. TyrS type 2 subfamily. In terms of assembly, homodimer.

It is found in the cytoplasm. The catalysed reaction is tRNA(Tyr) + L-tyrosine + ATP = L-tyrosyl-tRNA(Tyr) + AMP + diphosphate + H(+). Functionally, catalyzes the attachment of tyrosine to tRNA(Tyr) in a two-step reaction: tyrosine is first activated by ATP to form Tyr-AMP and then transferred to the acceptor end of tRNA(Tyr). The sequence is that of Tyrosine--tRNA ligase from Geobacter metallireducens (strain ATCC 53774 / DSM 7210 / GS-15).